Reading from the N-terminus, the 158-residue chain is Cyclic pyranopterin monophosphate synthase (158 aa).

Residues 74-76 (MCH) and 112-113 (ME) each bind substrate. Asp127 is a catalytic residue.

This sequence belongs to the MoaC family. As to quaternary structure, homohexamer; trimer of dimers.

It catalyses the reaction (8S)-3',8-cyclo-7,8-dihydroguanosine 5'-triphosphate = cyclic pyranopterin phosphate + diphosphate. It functions in the pathway cofactor biosynthesis; molybdopterin biosynthesis. Its function is as follows. Catalyzes the conversion of (8S)-3',8-cyclo-7,8-dihydroguanosine 5'-triphosphate to cyclic pyranopterin monophosphate (cPMP). In Helicobacter pylori (strain P12), this protein is Cyclic pyranopterin monophosphate synthase.